Here is a 261-residue protein sequence, read N- to C-terminus: Glucosamine-6-phosphate deaminase (261 aa).

The active-site Proton acceptor; for enolization step is the aspartate 67. Aspartate 136 functions as the For ring-opening step in the catalytic mechanism. The active-site Proton acceptor; for ring-opening step is the histidine 138. Glutamate 143 serves as the catalytic For ring-opening step.

The protein belongs to the glucosamine/galactosamine-6-phosphate isomerase family. NagB subfamily.

It carries out the reaction alpha-D-glucosamine 6-phosphate + H2O = beta-D-fructose 6-phosphate + NH4(+). It functions in the pathway amino-sugar metabolism; N-acetylneuraminate degradation; D-fructose 6-phosphate from N-acetylneuraminate: step 5/5. Catalyzes the reversible isomerization-deamination of glucosamine 6-phosphate (GlcN6P) to form fructose 6-phosphate (Fru6P) and ammonium ion. In Streptomyces avermitilis (strain ATCC 31267 / DSM 46492 / JCM 5070 / NBRC 14893 / NCIMB 12804 / NRRL 8165 / MA-4680), this protein is Glucosamine-6-phosphate deaminase.